A 96-amino-acid chain; its full sequence is Co-chaperonin GroES (96 aa).

Belongs to the GroES chaperonin family. In terms of assembly, heptamer of 7 subunits arranged in a ring. Interacts with the chaperonin GroEL.

It is found in the cytoplasm. In terms of biological role, together with the chaperonin GroEL, plays an essential role in assisting protein folding. The GroEL-GroES system forms a nano-cage that allows encapsulation of the non-native substrate proteins and provides a physical environment optimized to promote and accelerate protein folding. GroES binds to the apical surface of the GroEL ring, thereby capping the opening of the GroEL channel. In Haemophilus influenzae (strain ATCC 51907 / DSM 11121 / KW20 / Rd), this protein is Co-chaperonin GroES.